Reading from the N-terminus, the 241-residue chain is Octanoyltransferase (241 aa).

The BPL/LPL catalytic domain maps to 38-227 (AGGPDTLLLL…AVCNALDGAL (190 aa)). Residues 85–92 (RGGKITWH), 157–159 (AIG), and 170–172 (GFA) each bind substrate. The active-site Acyl-thioester intermediate is cysteine 188.

Belongs to the LipB family.

The protein resides in the cytoplasm. It catalyses the reaction octanoyl-[ACP] + L-lysyl-[protein] = N(6)-octanoyl-L-lysyl-[protein] + holo-[ACP] + H(+). It functions in the pathway protein modification; protein lipoylation via endogenous pathway; protein N(6)-(lipoyl)lysine from octanoyl-[acyl-carrier-protein]: step 1/2. In terms of biological role, catalyzes the transfer of endogenously produced octanoic acid from octanoyl-acyl-carrier-protein onto the lipoyl domains of lipoate-dependent enzymes. Lipoyl-ACP can also act as a substrate although octanoyl-ACP is likely to be the physiological substrate. The chain is Octanoyltransferase from Mycobacterium marinum (strain ATCC BAA-535 / M).